A 191-amino-acid polypeptide reads, in one-letter code: ATP synthase subunit b 1 (191 aa).

A helical transmembrane segment spans residues 7–25 (RMRILCLCATTLLMAGSAL).

Belongs to the ATPase B chain family. F-type ATPases have 2 components, F(1) - the catalytic core - and F(0) - the membrane proton channel. F(1) has five subunits: alpha(3), beta(3), gamma(1), delta(1), epsilon(1). F(0) has three main subunits: a(1), b(2) and c(10-14). The alpha and beta chains form an alternating ring which encloses part of the gamma chain. F(1) is attached to F(0) by a central stalk formed by the gamma and epsilon chains, while a peripheral stalk is formed by the delta and b chains.

It localises to the cell inner membrane. In terms of biological role, f(1)F(0) ATP synthase produces ATP from ADP in the presence of a proton or sodium gradient. F-type ATPases consist of two structural domains, F(1) containing the extramembraneous catalytic core and F(0) containing the membrane proton channel, linked together by a central stalk and a peripheral stalk. During catalysis, ATP synthesis in the catalytic domain of F(1) is coupled via a rotary mechanism of the central stalk subunits to proton translocation. Its function is as follows. Component of the F(0) channel, it forms part of the peripheral stalk, linking F(1) to F(0). This is ATP synthase subunit b 1 from Syntrophotalea carbinolica (strain DSM 2380 / NBRC 103641 / GraBd1) (Pelobacter carbinolicus).